Reading from the N-terminus, the 148-residue chain is MKALIILGLVLLSVTVQGKIFERCELARTLKKLGLDGYKGVSLANWVCLAKWESGYNTEATNYNPGDESTDYGIFQINSRYWCNNGKTPGAVDACHISCSALLQNNIADAVACAKRVVSDPQGVRAWVAWRNHCQNKDVSQYVKGCGV.

Residues 1 to 18 (MKALIILGLVLLSVTVQG) form the signal peptide. A C-type lysozyme domain is found at 19 to 148 (KIFERCELAR…VSQYVKGCGV (130 aa)). 4 disulfide bridges follow: cysteine 24–cysteine 146, cysteine 48–cysteine 134, cysteine 83–cysteine 99, and cysteine 95–cysteine 113. Residues glutamate 53 and aspartate 71 contribute to the active site.

Belongs to the glycosyl hydrolase 22 family. As to quaternary structure, monomer.

The protein resides in the secreted. The enzyme catalyses Hydrolysis of (1-&gt;4)-beta-linkages between N-acetylmuramic acid and N-acetyl-D-glucosamine residues in a peptidoglycan and between N-acetyl-D-glucosamine residues in chitodextrins.. In terms of biological role, lysozymes have primarily a bacteriolytic function; those in tissues and body fluids are associated with the monocyte-macrophage system and enhance the activity of immunoagents. The sequence is that of Lysozyme C (LYZ) from Pygathrix nemaeus (Red-shanked douc langur).